The primary structure comprises 172 residues: MFKEEIVVEHLVNVNRVTKVVKGGRRFSFSACVVLGNKAGKVGYGHGKAKEVGEARLKALQNAKKYMIEVPLYKGRTIHYDVYGKSGAAKVMLRRARAGTGIIAGGAMRFIFDSLGIQDVVAKSFGSSNSYLMIAATLNALKQLETPRVIAERRGLRLNELSVTIYKTFHEG.

The 64-residue stretch at 7–70 (VVEHLVNVNR…QNAKKYMIEV (64 aa)) folds into the S5 DRBM domain.

This sequence belongs to the universal ribosomal protein uS5 family. As to quaternary structure, part of the 30S ribosomal subunit. Contacts proteins S4 and S8.

In terms of biological role, with S4 and S12 plays an important role in translational accuracy. Its function is as follows. Located at the back of the 30S subunit body where it stabilizes the conformation of the head with respect to the body. The polypeptide is Small ribosomal subunit protein uS5 (Orientia tsutsugamushi (strain Boryong) (Rickettsia tsutsugamushi)).